We begin with the raw amino-acid sequence, 363 residues long: Probable iron/ascorbate oxidoreductase DDB_G0283291 (363 aa).

In terms of domain architecture, Fe2OG dioxygenase spans Ile197–Pro306. Positions 230, 232, and 286 each coordinate Fe cation. Arg297 is a binding site for 2-oxoglutarate.

The protein belongs to the iron/ascorbate-dependent oxidoreductase family. The cofactor is Fe(2+).

In Dictyostelium discoideum (Social amoeba), this protein is Probable iron/ascorbate oxidoreductase DDB_G0283291.